The chain runs to 183 residues: ATP synthase subunit b, chloroplastic (183 aa).

The helical transmembrane segment at 27-49 (LATNLINLTVVVGVLIYFGKGVL) threads the bilayer.

The protein belongs to the ATPase B chain family. As to quaternary structure, F-type ATPases have 2 components, F(1) - the catalytic core - and F(0) - the membrane proton channel. F(1) has five subunits: alpha(3), beta(3), gamma(1), delta(1), epsilon(1). F(0) has four main subunits: a(1), b(1), b'(1) and c(10-14). The alpha and beta chains form an alternating ring which encloses part of the gamma chain. F(1) is attached to F(0) by a central stalk formed by the gamma and epsilon chains, while a peripheral stalk is formed by the delta, b and b' chains.

The protein localises to the plastid. It localises to the chloroplast thylakoid membrane. F(1)F(0) ATP synthase produces ATP from ADP in the presence of a proton or sodium gradient. F-type ATPases consist of two structural domains, F(1) containing the extramembraneous catalytic core and F(0) containing the membrane proton channel, linked together by a central stalk and a peripheral stalk. During catalysis, ATP synthesis in the catalytic domain of F(1) is coupled via a rotary mechanism of the central stalk subunits to proton translocation. In terms of biological role, component of the F(0) channel, it forms part of the peripheral stalk, linking F(1) to F(0). This is ATP synthase subunit b, chloroplastic from Oryza nivara (Indian wild rice).